Reading from the N-terminus, the 471-residue chain is ATP synthase subunit beta (471 aa).

159–166 (GGAGVGKT) lines the ATP pocket.

The protein belongs to the ATPase alpha/beta chains family. In terms of assembly, F-type ATPases have 2 components, CF(1) - the catalytic core - and CF(0) - the membrane proton channel. CF(1) has five subunits: alpha(3), beta(3), gamma(1), delta(1), epsilon(1). CF(0) has four main subunits: a(1), b(1), b'(1) and c(9-12).

It localises to the cell membrane. The catalysed reaction is ATP + H2O + 4 H(+)(in) = ADP + phosphate + 5 H(+)(out). Functionally, produces ATP from ADP in the presence of a proton gradient across the membrane. The catalytic sites are hosted primarily by the beta subunits. The protein is ATP synthase subunit beta of Heliobacterium modesticaldum (strain ATCC 51547 / Ice1).